The chain runs to 264 residues: Ribonuclease HII (264 aa).

Residues 33-224 (GPVAGVDEVG…VRRVASGSNT (192 aa)) enclose the RNase H type-2 domain. Residues D39, E40, and D133 each coordinate a divalent metal cation. The tract at residues 222-264 (SNTAEVADGQPDPRDGTAQTGEGRWSKSSHPATMRATGRAQGT) is disordered.

It belongs to the RNase HII family. Requires Mn(2+) as cofactor. The cofactor is Mg(2+).

Its subcellular location is the cytoplasm. The catalysed reaction is Endonucleolytic cleavage to 5'-phosphomonoester.. Functionally, endonuclease that specifically degrades the RNA of RNA-DNA hybrids. This is Ribonuclease HII from Mycobacterium bovis (strain BCG / Pasteur 1173P2).